The sequence spans 158 residues: Transcription elongation factor GreA (158 aa).

Over residues 24 to 43 (DVERPKASEAIGEARDKGDL) the composition is skewed to basic and acidic residues. The disordered stretch occupies residues 24 to 47 (DVERPKASEAIGEARDKGDLSENA). A coiled-coil region spans residues 48–68 (EYDAAKEAQGLLEMKISKMEE).

This sequence belongs to the GreA/GreB family.

In terms of biological role, necessary for efficient RNA polymerase transcription elongation past template-encoded arresting sites. The arresting sites in DNA have the property of trapping a certain fraction of elongating RNA polymerases that pass through, resulting in locked ternary complexes. Cleavage of the nascent transcript by cleavage factors such as GreA or GreB allows the resumption of elongation from the new 3'terminus. GreA releases sequences of 2 to 3 nucleotides. This Christiangramia forsetii (strain DSM 17595 / CGMCC 1.15422 / KT0803) (Gramella forsetii) protein is Transcription elongation factor GreA.